A 94-amino-acid polypeptide reads, in one-letter code: Large ribosomal subunit protein eL42 (94 aa).

4 residues coordinate Zn(2+): Cys-11, Cys-14, Cys-71, and Cys-74. A C4-type zinc finger spans residues 11–74 (CPYCKRHTIH…LDLRFVCTVC (64 aa)).

The protein belongs to the eukaryotic ribosomal protein eL42 family. As to quaternary structure, part of the 50S ribosomal subunit. The cofactor is Zn(2+).

Binds to the 23S rRNA. This is Large ribosomal subunit protein eL42 from Pyrococcus horikoshii (strain ATCC 700860 / DSM 12428 / JCM 9974 / NBRC 100139 / OT-3).